A 174-amino-acid polypeptide reads, in one-letter code: ATP synthase subunit b, organellar chromatophore (174 aa).

Residues 26 to 46 traverse the membrane as a helical segment; the sequence is LINLIIVIGVLFTFLRGFLGE.

It belongs to the ATPase B chain family. F-type ATPases have 2 components, F(1) - the catalytic core - and F(0) - the membrane proton channel. F(1) has five subunits: alpha(3), beta(3), gamma(1), delta(1), epsilon(1). F(0) has four main subunits: a(1), b(1), b'(1) and c(10-14). The alpha and beta chains form an alternating ring which encloses part of the gamma chain. F(1) is attached to F(0) by a central stalk formed by the gamma and epsilon chains, while a peripheral stalk is formed by the delta, b and b' chains.

Its subcellular location is the plastid. The protein resides in the organellar chromatophore thylakoid membrane. F(1)F(0) ATP synthase produces ATP from ADP in the presence of a proton or sodium gradient. F-type ATPases consist of two structural domains, F(1) containing the extramembraneous catalytic core and F(0) containing the membrane proton channel, linked together by a central stalk and a peripheral stalk. During catalysis, ATP synthesis in the catalytic domain of F(1) is coupled via a rotary mechanism of the central stalk subunits to proton translocation. Its function is as follows. Component of the F(0) channel, it forms part of the peripheral stalk, linking F(1) to F(0). In Paulinella chromatophora, this protein is ATP synthase subunit b, organellar chromatophore.